Consider the following 128-residue polypeptide: Large ribosomal subunit protein uL22 (128 aa).

The segment at 1–20 is disordered; that stretch reads MANGHRSQIKRERNAVKDTR. The segment covering 9-20 has biased composition (basic and acidic residues); the sequence is IKRERNAVKDTR.

This sequence belongs to the universal ribosomal protein uL22 family. In terms of assembly, part of the 50S ribosomal subunit.

Its function is as follows. This protein binds specifically to 23S rRNA; its binding is stimulated by other ribosomal proteins, e.g. L4, L17, and L20. It is important during the early stages of 50S assembly. It makes multiple contacts with different domains of the 23S rRNA in the assembled 50S subunit and ribosome. The globular domain of the protein is located near the polypeptide exit tunnel on the outside of the subunit, while an extended beta-hairpin is found that lines the wall of the exit tunnel in the center of the 70S ribosome. This Lachnospira eligens (strain ATCC 27750 / DSM 3376 / VPI C15-48 / C15-B4) (Eubacterium eligens) protein is Large ribosomal subunit protein uL22.